Here is a 234-residue protein sequence, read N- to C-terminus: bZIP transcription factor 1 (234 aa).

The tract at residues 67–134 (RAQSDGSNAL…DKQRNAQQQL (68 aa)) is disordered. A compositionally biased stretch (polar residues) spans 70–86 (SDGSNALLSSIGPSGTT). Basic and acidic residues predominate over residues 88-128 (RPRDEMDCFTDTHKHKRGDGNKSRRREQCRANQARYRDKQR). The 64-residue stretch at 106–169 (DGNKSRRREQ…RTNQSPWNTV (64 aa)) folds into the bZIP domain. The interval 109–128 (KSRRREQCRANQARYRDKQR) is basic motif. A leucine-zipper region spans residues 134 to 155 (LERSVEQLQSELSTLKHRNLDL).

Belongs to the bZIP family. Interacts with PKZ1.

It is found in the nucleus. Functionally, required for normal zoospore movement, formation of appressoria by germinated zoospore cysts and plant infection. This Phytophthora infestans (Potato late blight agent) protein is bZIP transcription factor 1.